Reading from the N-terminus, the 309-residue chain is Aspartate carbamoyltransferase catalytic subunit (309 aa).

Carbamoyl phosphate contacts are provided by Arg58 and Thr59. Residue Lys87 coordinates L-aspartate. Arg108, His136, and Gln139 together coordinate carbamoyl phosphate. 2 residues coordinate L-aspartate: Arg168 and Arg229. Carbamoyl phosphate is bound by residues Leu268 and Pro269.

The protein belongs to the aspartate/ornithine carbamoyltransferase superfamily. ATCase family. As to quaternary structure, heterooligomer of catalytic and regulatory chains.

The enzyme catalyses carbamoyl phosphate + L-aspartate = N-carbamoyl-L-aspartate + phosphate + H(+). It functions in the pathway pyrimidine metabolism; UMP biosynthesis via de novo pathway; (S)-dihydroorotate from bicarbonate: step 2/3. In terms of biological role, catalyzes the condensation of carbamoyl phosphate and aspartate to form carbamoyl aspartate and inorganic phosphate, the committed step in the de novo pyrimidine nucleotide biosynthesis pathway. This is Aspartate carbamoyltransferase catalytic subunit from Methanosarcina mazei (strain ATCC BAA-159 / DSM 3647 / Goe1 / Go1 / JCM 11833 / OCM 88) (Methanosarcina frisia).